The primary structure comprises 692 residues: Elongation factor G (692 aa).

Positions 9-284 (EKIRNIGIMA…AVVDYLPSPV (276 aa)) constitute a tr-type G domain. Residues 18 to 25 (AHIDAGKT), 82 to 86 (DTPGH), and 136 to 139 (NKMD) contribute to the GTP site.

It belongs to the TRAFAC class translation factor GTPase superfamily. Classic translation factor GTPase family. EF-G/EF-2 subfamily.

It is found in the cytoplasm. In terms of biological role, catalyzes the GTP-dependent ribosomal translocation step during translation elongation. During this step, the ribosome changes from the pre-translocational (PRE) to the post-translocational (POST) state as the newly formed A-site-bound peptidyl-tRNA and P-site-bound deacylated tRNA move to the P and E sites, respectively. Catalyzes the coordinated movement of the two tRNA molecules, the mRNA and conformational changes in the ribosome. This chain is Elongation factor G, found in Neorickettsia sennetsu (strain ATCC VR-367 / Miyayama) (Ehrlichia sennetsu).